The following is a 406-amino-acid chain: Probable transcription factor FPSE_09188 (406 aa).

Residues 1-72 (MELPTYAVSQ…PKGSSSRCNG (72 aa)) are disordered. Over residues 7 to 20 (AVSQSLLASRSVSS) the composition is skewed to low complexity.

The protein belongs to the bZIP family.

Its subcellular location is the nucleus. Its function is as follows. The two putative transcription factors FPSE_09188 and FPSE_09189 could be responsible for orchestrating expression of the W493 A and B biosynthesis cluster genes. W493 A and B consist of six amino acid residues D-allo-thr, L-Ala, D-Ala, L-Gln, D-Tyr, and L-Val/L-Ile linked to a 3-hydroxy-4-methyltetradecanoic acid polyketide chain. The chain is Probable transcription factor FPSE_09188 from Fusarium pseudograminearum (strain CS3096) (Wheat and barley crown-rot fungus).